We begin with the raw amino-acid sequence, 112 residues long: Small ribosomal subunit protein bS6 (112 aa).

It belongs to the bacterial ribosomal protein bS6 family.

Functionally, binds together with bS18 to 16S ribosomal RNA. This is Small ribosomal subunit protein bS6 (rpsF) from Chlamydia pneumoniae (Chlamydophila pneumoniae).